A 472-amino-acid chain; its full sequence is Adenosylhomocysteinase (472 aa).

Substrate-binding residues include Thr62, Asp137, and Glu197. Residue 198–200 (TTT) participates in NAD(+) binding. Substrate is bound by residues Lys227 and Asp231. NAD(+) contacts are provided by residues Asn232, 261-266 (GYGDVG), Glu284, Asn319, 340-342 (IGH), and Asn385.

The protein belongs to the adenosylhomocysteinase family. Requires NAD(+) as cofactor.

The protein resides in the cytoplasm. The enzyme catalyses S-adenosyl-L-homocysteine + H2O = L-homocysteine + adenosine. Its pathway is amino-acid biosynthesis; L-homocysteine biosynthesis; L-homocysteine from S-adenosyl-L-homocysteine: step 1/1. Its function is as follows. May play a key role in the regulation of the intracellular concentration of adenosylhomocysteine. This is Adenosylhomocysteinase from Bordetella petrii (strain ATCC BAA-461 / DSM 12804 / CCUG 43448).